Reading from the N-terminus, the 338-residue chain is Phosphoribosylformylglycinamidine cyclo-ligase (338 aa).

The protein belongs to the AIR synthase family.

Its subcellular location is the cytoplasm. The enzyme catalyses 2-formamido-N(1)-(5-O-phospho-beta-D-ribosyl)acetamidine + ATP = 5-amino-1-(5-phospho-beta-D-ribosyl)imidazole + ADP + phosphate + H(+). Its pathway is purine metabolism; IMP biosynthesis via de novo pathway; 5-amino-1-(5-phospho-D-ribosyl)imidazole from N(2)-formyl-N(1)-(5-phospho-D-ribosyl)glycinamide: step 2/2. The polypeptide is Phosphoribosylformylglycinamidine cyclo-ligase (Thermoplasma volcanium (strain ATCC 51530 / DSM 4299 / JCM 9571 / NBRC 15438 / GSS1)).